The primary structure comprises 1211 residues: DNA-directed RNA polymerase subunit beta' (1211 aa).

Zn(2+) is bound by residues Cys-60, Cys-62, Cys-75, and Cys-78. Mg(2+) is bound by residues Asp-450, Asp-452, and Asp-454. Zn(2+)-binding residues include Cys-819, Cys-893, Cys-900, and Cys-903.

This sequence belongs to the RNA polymerase beta' chain family. In terms of assembly, the RNAP catalytic core consists of 2 alpha, 1 beta, 1 beta' and 1 omega subunit. When a sigma factor is associated with the core the holoenzyme is formed, which can initiate transcription. Mg(2+) is required as a cofactor. It depends on Zn(2+) as a cofactor.

The catalysed reaction is RNA(n) + a ribonucleoside 5'-triphosphate = RNA(n+1) + diphosphate. Its function is as follows. DNA-dependent RNA polymerase catalyzes the transcription of DNA into RNA using the four ribonucleoside triphosphates as substrates. In Streptococcus equi subsp. zooepidemicus (strain H70), this protein is DNA-directed RNA polymerase subunit beta'.